The primary structure comprises 602 residues: Elongation factor 4 (602 aa).

The region spanning 6–188 (DHIRNFSIVA…AIVTQLPAPK (183 aa)) is the tr-type G domain. GTP is bound by residues 18–23 (DHGKST) and 135–138 (NKID).

It belongs to the TRAFAC class translation factor GTPase superfamily. Classic translation factor GTPase family. LepA subfamily.

It is found in the cell inner membrane. The catalysed reaction is GTP + H2O = GDP + phosphate + H(+). Functionally, required for accurate and efficient protein synthesis under certain stress conditions. May act as a fidelity factor of the translation reaction, by catalyzing a one-codon backward translocation of tRNAs on improperly translocated ribosomes. Back-translocation proceeds from a post-translocation (POST) complex to a pre-translocation (PRE) complex, thus giving elongation factor G a second chance to translocate the tRNAs correctly. Binds to ribosomes in a GTP-dependent manner. This is Elongation factor 4 from Brucella anthropi (strain ATCC 49188 / DSM 6882 / CCUG 24695 / JCM 21032 / LMG 3331 / NBRC 15819 / NCTC 12168 / Alc 37) (Ochrobactrum anthropi).